The following is a 390-amino-acid chain: Phosphopentomutase (390 aa).

Residues Asp14, Asp286, His291, Asp327, His328, and His339 each contribute to the Mn(2+) site.

The protein belongs to the phosphopentomutase family. It depends on Mn(2+) as a cofactor.

Its subcellular location is the cytoplasm. The catalysed reaction is 2-deoxy-alpha-D-ribose 1-phosphate = 2-deoxy-D-ribose 5-phosphate. It carries out the reaction alpha-D-ribose 1-phosphate = D-ribose 5-phosphate. It functions in the pathway carbohydrate degradation; 2-deoxy-D-ribose 1-phosphate degradation; D-glyceraldehyde 3-phosphate and acetaldehyde from 2-deoxy-alpha-D-ribose 1-phosphate: step 1/2. Its function is as follows. Isomerase that catalyzes the conversion of deoxy-ribose 1-phosphate (dRib-1-P) and ribose 1-phosphate (Rib-1-P) to deoxy-ribose 5-phosphate (dRib-5-P) and ribose 5-phosphate (Rib-5-P), respectively. The chain is Phosphopentomutase from Exiguobacterium sibiricum (strain DSM 17290 / CCUG 55495 / CIP 109462 / JCM 13490 / 255-15).